We begin with the raw amino-acid sequence, 273 residues long: MAATTLYNSCLLQPKYGFTTRRLNQSLVNSLTNPTRVSVLWKSRRDVIAKASIEMAESNSISSVVVNSSGPIIVIDNYDSFTYNLCQYMGELGCHFEVYRNDELTVEELKRKKPRGLLISPGPGTPQDSGISLQTVLELGPLVPLFGVCMGLQCIGEAFGGKIVRSPFGVMHGKSSMVHYDEKGEEGLFSGLSNPFLVGRYHSLVIEKDSFPSDELEVTAWTEDGLVMAARHRKYKHIQGVQFHPESIITTEGKTIVRNFIKLVEKKESEKLA.

The transit peptide at 1–36 directs the protein to the chloroplast; the sequence is MAATTLYNSCLLQPKYGFTTRRLNQSLVNSLTNPTR. Positions 71 to 270 constitute a Glutamine amidotransferase type-1 domain; the sequence is PIIVIDNYDS…IKLVEKKESE (200 aa). C149 (nucleophile) is an active-site residue. Active-site residues include H244 and E246.

In terms of assembly, heterotetramer consisting of two non-identical subunits: a beta subunit and a large alpha subunit.

The protein resides in the plastid. It is found in the chloroplast. The catalysed reaction is chorismate + L-glutamine = anthranilate + pyruvate + L-glutamate + H(+). Its pathway is amino-acid biosynthesis; L-tryptophan biosynthesis; L-tryptophan from chorismate: step 1/5. Its activity is regulated as follows. Feedback inhibition by tryptophan. Functionally, part of a heterotetrameric complex that catalyzes the two-step biosynthesis of anthranilate, an intermediate in the biosynthesis of L-tryptophan. In the first step, the glutamine-binding beta subunit of anthranilate synthase (AS) provides the glutamine amidotransferase activity which generates ammonia as a substrate that, along with chorismate, is used in the second step, catalyzed by the large alpha subunit of AS to produce anthranilate. In Arabidopsis thaliana (Mouse-ear cress), this protein is Anthranilate synthase beta subunit 2, chloroplastic (ASB2).